The sequence spans 148 residues: Large ribosomal subunit protein uL15 (148 aa).

Positions 1 to 50 are disordered; that stretch reads MNLSNLKPAEGSTKTRKRIGRGPGSGLGGTSTRGHKGAKSRSGYSKKIGF. Residues 21–31 are compositionally biased toward gly residues; the sequence is RGPGSGLGGTS.

The protein belongs to the universal ribosomal protein uL15 family. In terms of assembly, part of the 50S ribosomal subunit.

Its function is as follows. Binds to the 23S rRNA. The polypeptide is Large ribosomal subunit protein uL15 (Bacteroides fragilis (strain ATCC 25285 / DSM 2151 / CCUG 4856 / JCM 11019 / LMG 10263 / NCTC 9343 / Onslow / VPI 2553 / EN-2)).